The primary structure comprises 146 residues: 3-dehydroquinate dehydratase (146 aa).

Y22 serves as the catalytic Proton acceptor. Residues N73, H79, and D86 each contribute to the substrate site. H99 functions as the Proton donor in the catalytic mechanism. Residues 100-101 and R110 contribute to the substrate site; that span reads LS.

It belongs to the type-II 3-dehydroquinase family. Homododecamer.

The catalysed reaction is 3-dehydroquinate = 3-dehydroshikimate + H2O. The protein operates within metabolic intermediate biosynthesis; chorismate biosynthesis; chorismate from D-erythrose 4-phosphate and phosphoenolpyruvate: step 3/7. Functionally, catalyzes a trans-dehydration via an enolate intermediate. The sequence is that of 3-dehydroquinate dehydratase from Synechococcus sp. (strain CC9902).